Consider the following 703-residue polypeptide: Serotransferrin (703 aa).

The first 19 residues, 1–19, serve as a signal peptide directing secretion; that stretch reads MDLSLHVALCLGMLALCLA. Transferrin-like domains follow at residues 27–341 and 354–686; these read VRWC…ALKE and VRWC…SLNK. Cystine bridges form between Cys30/Cys65 and Cys40/Cys56. Asp80 and Tyr112 together coordinate Fe(3+). 3 disulfide bridges follow: Cys135-Cys218, Cys180-Cys193, and Cys246-Cys260. Hydrogencarbonate is bound by residues Thr137, Lys141, Ala143, and Gly144. Tyr212 contacts Fe(3+). His268 serves as a coordination point for Fe(3+). The segment at 341–350 is connecting region; sequence EGVKEDDLAA. 2 disulfides stabilise this stretch: Cys357–Cys389 and Cys367–Cys380. Fe(3+) is bound by residues Asp404 and Tyr443. 7 disulfide bridges follow: Cys414-Cys698, Cys432-Cys659, Cys466-Cys545, Cys490-Cys687, Cys500-Cys514, Cys511-Cys528, and Cys585-Cys599. Residues Thr468, Arg472, Ala474, and Gly475 each coordinate hydrogencarbonate. Tyr539 contributes to the Fe(3+) binding site. His607 contributes to the Fe(3+) binding site.

The protein belongs to the transferrin family. In terms of assembly, monomer. As to expression, plasma.

The protein resides in the secreted. Functionally, transferrins are iron binding transport proteins which can bind two Fe(3+) ions in association with the binding of an anion, usually bicarbonate. It is responsible for the transport of iron from sites of absorption and heme degradation to those of storage and utilization. Serum transferrin may also have a further role in stimulating cell proliferation. The chain is Serotransferrin (tf) from Xenopus tropicalis (Western clawed frog).